Reading from the N-terminus, the 279-residue chain is NH(3)-dependent NAD(+) synthetase (279 aa).

Position 46 to 53 (G46 to S53) interacts with ATP. Residue D52 coordinates Mg(2+). R145 provides a ligand contact to deamido-NAD(+). An ATP-binding site is contributed by T165. Mg(2+) is bound at residue E170. 2 residues coordinate deamido-NAD(+): K178 and D185. The ATP site is built by K194 and T216. A deamido-NAD(+)-binding site is contributed by H265–K266.

Belongs to the NAD synthetase family. In terms of assembly, homodimer.

The catalysed reaction is deamido-NAD(+) + NH4(+) + ATP = AMP + diphosphate + NAD(+) + H(+). Its pathway is cofactor biosynthesis; NAD(+) biosynthesis; NAD(+) from deamido-NAD(+) (ammonia route): step 1/1. Its function is as follows. Catalyzes the ATP-dependent amidation of deamido-NAD to form NAD. Uses ammonia as a nitrogen source. The protein is NH(3)-dependent NAD(+) synthetase of Rhodococcus jostii (strain RHA1).